The primary structure comprises 508 residues: p-aminobenzoyl-glutamate transport protein (508 aa).

The next 13 helical transmembrane spans lie at 30–50, 85–105, 121–139, 140–159, 164–184, 211–231, 261–281, 303–323, 343–363, 382–402, 405–425, 439–459, and 479–499; these read FLLF…LSAF, FSGF…GLAE, VNAR…FSHI, SSDA…FLAV, VAGL…NLLI, IDNW…GGLI, GLRI…LMVI, GIVP…GIAT, MAGF…FNWS, LSGI…CMFI, GSAI…LLGF, SSVL…GFLQ, and LIFL…GLPI.

The protein resides in the cell inner membrane. The enzyme catalyses N-(4-aminobenzoyl)-L-glutamate(in) + H(+)(in) = N-(4-aminobenzoyl)-L-glutamate(out) + H(+)(out). Completely inhibited by 100 nM sodium azide and by the proton ionophore carbonyl cyanide m-chlorophenylhydrazone (CCCP). Is also strongly inhibited by 100 mM potassium fluoride. Essential for aminobenzoyl-glutamate utilization. It catalyzes the concentration-dependent uptake of p-aminobenzoyl-glutamate (PABA-GLU) into the cell and allows accumulation of PABA-GLU to a concentration enabling AbgAB to catalyze cleavage into p-aminobenzoate and glutamate. It also seems to increase the sensitivity to low levels of aminobenzoyl-glutamate. May actually serve physiologically as a transporter for some other molecule, perhaps a dipeptide, and that it transports p-aminobenzoyl-glutamate as a secondary activity. The physiological role of abgABT should be clarified. In Escherichia coli (strain K12), this protein is p-aminobenzoyl-glutamate transport protein.